The chain runs to 303 residues: Probable cell division protein WhiA (303 aa).

Positions 272-303 (SIQQIADSLETPLSKSGVNHRLRKINKIADEL) form a DNA-binding region, H-T-H motif.

It belongs to the WhiA family.

In terms of biological role, involved in cell division and chromosome segregation. This chain is Probable cell division protein WhiA, found in Streptococcus agalactiae serotype Ia (strain ATCC 27591 / A909 / CDC SS700).